The primary structure comprises 202 residues: ATP-dependent Clp protease proteolytic subunit (202 aa).

Ser106 acts as the Nucleophile in catalysis. His131 is an active-site residue.

The protein belongs to the peptidase S14 family. As to quaternary structure, fourteen ClpP subunits assemble into 2 heptameric rings which stack back to back to give a disk-like structure with a central cavity, resembling the structure of eukaryotic proteasomes.

The protein localises to the cytoplasm. It carries out the reaction Hydrolysis of proteins to small peptides in the presence of ATP and magnesium. alpha-casein is the usual test substrate. In the absence of ATP, only oligopeptides shorter than five residues are hydrolyzed (such as succinyl-Leu-Tyr-|-NHMec, and Leu-Tyr-Leu-|-Tyr-Trp, in which cleavage of the -Tyr-|-Leu- and -Tyr-|-Trp bonds also occurs).. Its function is as follows. Cleaves peptides in various proteins in a process that requires ATP hydrolysis. Has a chymotrypsin-like activity. Plays a major role in the degradation of misfolded proteins. This chain is ATP-dependent Clp protease proteolytic subunit, found in Shewanella sp. (strain MR-7).